The sequence spans 312 residues: Malate dehydrogenase (312 aa).

Residues Gly-7–Gly-13 and Asp-34 each bind NAD(+). Substrate contacts are provided by Arg-81 and Arg-87. NAD(+) is bound by residues Asn-94 and Ile-117–Asn-119. Residues Asn-119 and Arg-153 each contribute to the substrate site. His-177 acts as the Proton acceptor in catalysis. Position 227 (Met-227) interacts with NAD(+).

It belongs to the LDH/MDH superfamily. MDH type 1 family. Homodimer.

It catalyses the reaction (S)-malate + NAD(+) = oxaloacetate + NADH + H(+). Catalyzes the reversible oxidation of malate to oxaloacetate. This Cronobacter sakazakii (strain ATCC BAA-894) (Enterobacter sakazakii) protein is Malate dehydrogenase.